The sequence spans 203 residues: Small ribosomal subunit protein uS4 (203 aa).

Residues 1 to 46 are disordered; it reads MSKRQSAKYKLDRRMGENIWGRPKSPVNRREYGPGQHGQRRKGKMS. In terms of domain architecture, S4 RNA-binding spans 94–157; sequence RRLDAVVYRA…QEMALVAEAQ (64 aa).

The protein belongs to the universal ribosomal protein uS4 family. As to quaternary structure, part of the 30S ribosomal subunit. Contacts protein S5. The interaction surface between S4 and S5 is involved in control of translational fidelity.

In terms of biological role, one of the primary rRNA binding proteins, it binds directly to 16S rRNA where it nucleates assembly of the body of the 30S subunit. Functionally, with S5 and S12 plays an important role in translational accuracy. This Sphingopyxis alaskensis (strain DSM 13593 / LMG 18877 / RB2256) (Sphingomonas alaskensis) protein is Small ribosomal subunit protein uS4.